The primary structure comprises 218 residues: MGQKINPIGFRLGTTQGHHSLWFAQPKNYSEGLQEDKKIRTYIQNYVQKNMKTSSGVEGIARIEIQKRIDLIQIIIYMGFPKILIESRPRGIEELQMNLQKEFHSVNRKLNIAITRIEKPYGNPNILAEFIAGQLKNRVSFRKAMKKAIELTEQADTKGIQVQIAGRIDGKEIARVEWIREGRVPLQTIRAKIDYCCYTVRTIYGVLGIKIWIFIDGE.

A KH type-2 domain is found at 47 to 118; that stretch reads VQKNMKTSSG…KLNIAITRIE (72 aa).

This sequence belongs to the universal ribosomal protein uS3 family. In terms of assembly, part of the 30S ribosomal subunit.

It localises to the plastid. Its subcellular location is the chloroplast. The protein is Small ribosomal subunit protein uS3c (rps3) of Lactuca sativa (Garden lettuce).